Here is a 57-residue protein sequence, read N- to C-terminus: UPF0391 membrane protein RPB_2510 (57 aa).

2 helical membrane-spanning segments follow: residues 6–26 (WALI…TGIS) and 35–55 (ILFY…FTIF).

Belongs to the UPF0391 family.

Its subcellular location is the cell membrane. This is UPF0391 membrane protein RPB_2510 from Rhodopseudomonas palustris (strain HaA2).